The chain runs to 211 residues: Protein N-terminal glutamine amidohydrolase (211 aa).

Residues Cys24, His78, and Asp94 contribute to the active site.

This sequence belongs to the NTAQ1 family. As to quaternary structure, monomer.

It carries out the reaction N-terminal L-glutaminyl-[protein] + H2O = N-terminal L-glutamyl-[protein] + NH4(+). Mediates the side-chain deamidation of N-terminal glutamine residues to glutamate, an important step in N-end rule pathway of protein degradation. Conversion of the resulting N-terminal glutamine to glutamate renders the protein susceptible to arginylation, polyubiquitination and degradation as specified by the N-end rule. Does not act on substrates with internal or C-terminal glutamine and does not act on non-glutamine residues in any position. The protein is Protein N-terminal glutamine amidohydrolase (tun) of Anopheles gambiae (African malaria mosquito).